The primary structure comprises 509 residues: Cytochrome P450 monooxygenase aba1 (509 aa).

The first 31 residues, Met1–Ala31, serve as a signal peptide directing secretion. Asn402 carries N-linked (GlcNAc...) asparagine glycosylation. Cys451 is a heme binding site. Asn462 is a glycosylation site (N-linked (GlcNAc...) asparagine).

This sequence belongs to the cytochrome P450 family. Requires heme as cofactor.

Its pathway is hormone biosynthesis. Its function is as follows. Cytochrome P450 monooxygenase; part of the gene cluster that mediates the biosynthesis of abscisic acid (ABA), a phytohormone that acts antagonistically toward salicylic acid (SA), jasmonic acid (JA) and ethylene (ETH) signaling, to impede plant defense responses. The first step of the pathway catalyzes the reaction from farnesyl diphosphate to alpha-ionylideneethane performed by the alpha-ionylideneethane synthase aba3 via a three-step reaction mechanism involving 2 neutral intermediates, beta-farnesene and allofarnesene. The cytochrome P450 monooxygenase aba1 might then be involved in the conversion of alpha-ionylideneethane to alpha-ionylideneacetic acid. Alpha-ionylideneacetic acid is further converted to abscisic acid in 2 steps involving the cytochrome P450 monooxygenase aba2 and the short-chain dehydrogenase/reductase aba4, via the intermediates 1'-deoxy-ABA or 1',4'-trans-diol-ABA, depending on the order of action of these 2 enzymes. Aba2 is responsible for the hydroxylation of carbon atom C-1' and aba4 might be involved in the oxidation of the C-4' carbon atom. The protein is Cytochrome P450 monooxygenase aba1 (aba1) of Botryotinia fuckeliana (strain B05.10) (Noble rot fungus).